The sequence spans 131 residues: Olfactory receptor-like protein COR9 (131 aa).

The Cytoplasmic segment spans residues 1-16 (VAICSPLLYSTVMTKR). A helical membrane pass occupies residues 17–41 (VCMQLVVGSYMGGLLNSLTHTCGLL). Residues 42–82 (GLPFCGPNVINHYFCDIPPLLQLACSDTHRNETLLLAFSAV) lie on the Extracellular side of the membrane. N-linked (GlcNAc...) asparagine glycosylation is present at N72. Residues 83 to 103 (IALFTLFVITASYMLILSVIL) form a helical membrane-spanning segment. Residues 104–116 (KIQSDDGRKKTFH) lie on the Cytoplasmic side of the membrane. A helical transmembrane segment spans residues 117-131 (TCASHLTAITIFFGS).

It belongs to the G-protein coupled receptor 1 family.

It is found in the cell membrane. In terms of biological role, odorant receptor. This is Olfactory receptor-like protein COR9 (COR9) from Gallus gallus (Chicken).